A 239-amino-acid polypeptide reads, in one-letter code: tRNA (guanine-N(1)-)-methyltransferase (239 aa).

S-adenosyl-L-methionine is bound by residues Gly-108 and 128–133 (VGNFIV).

Belongs to the RNA methyltransferase TrmD family. In terms of assembly, homodimer.

Its subcellular location is the cytoplasm. It carries out the reaction guanosine(37) in tRNA + S-adenosyl-L-methionine = N(1)-methylguanosine(37) in tRNA + S-adenosyl-L-homocysteine + H(+). In terms of biological role, specifically methylates guanosine-37 in various tRNAs. This chain is tRNA (guanine-N(1)-)-methyltransferase, found in Helicobacter hepaticus (strain ATCC 51449 / 3B1).